Here is a 406-residue protein sequence, read N- to C-terminus: Argininosuccinate synthase (406 aa).

An ATP-binding site is contributed by Ala8–Ser16. An L-citrulline-binding site is contributed by Tyr86. Gly116 is a binding site for ATP. L-aspartate contacts are provided by Thr118, Asn122, and Asp123. Asn122 is a binding site for L-citrulline. L-citrulline is bound by residues Arg126, Ser174, Ser183, Glu259, and Tyr271.

This sequence belongs to the argininosuccinate synthase family. Type 1 subfamily. In terms of assembly, homotetramer.

It is found in the cytoplasm. The enzyme catalyses L-citrulline + L-aspartate + ATP = 2-(N(omega)-L-arginino)succinate + AMP + diphosphate + H(+). Its pathway is amino-acid biosynthesis; L-arginine biosynthesis; L-arginine from L-ornithine and carbamoyl phosphate: step 2/3. In Dehalococcoides mccartyi (strain ATCC BAA-2266 / KCTC 15142 / 195) (Dehalococcoides ethenogenes (strain 195)), this protein is Argininosuccinate synthase.